A 174-amino-acid chain; its full sequence is UPF0316 protein LMOf2365_1801 (174 aa).

3 helical membrane-spanning segments follow: residues 4 to 24, 36 to 56, and 62 to 82; these read GIFI…IYTV, LAAL…SLVL, and IANV…GMKI.

It belongs to the UPF0316 family.

Its subcellular location is the cell membrane. This Listeria monocytogenes serotype 4b (strain F2365) protein is UPF0316 protein LMOf2365_1801.